Reading from the N-terminus, the 820-residue chain is Chitinase A (820 aa).

An N-terminal signal peptide occupies residues 1–21 (MKLNKITSYIGFALLSGGALA). The GH18 domain occupies 158 to 588 (RVTGAYFVEW…NAMYDGLTAG (431 aa)). The active-site Proton donor is the Glu313.

This sequence belongs to the glycosyl hydrolase 18 family. Chitinase class II subfamily.

The catalysed reaction is Random endo-hydrolysis of N-acetyl-beta-D-glucosaminide (1-&gt;4)-beta-linkages in chitin and chitodextrins.. With respect to regulation, stimulated by magnesium ions; inhibited by N-bromosuccinimide and 2-hydroxy-5-nitrobenzyl bromide. The protein is Chitinase A (chiA) of Pseudoalteromonas piscicida.